A 103-amino-acid chain; its full sequence is Large ribosomal subunit protein bL21 (103 aa).

It belongs to the bacterial ribosomal protein bL21 family. Part of the 50S ribosomal subunit. Contacts protein L20.

Its function is as follows. This protein binds to 23S rRNA in the presence of protein L20. In Bordetella avium (strain 197N), this protein is Large ribosomal subunit protein bL21.